Here is a 429-residue protein sequence, read N- to C-terminus: Histidine--tRNA ligase (429 aa).

This sequence belongs to the class-II aminoacyl-tRNA synthetase family. In terms of assembly, homodimer.

The protein resides in the cytoplasm. The catalysed reaction is tRNA(His) + L-histidine + ATP = L-histidyl-tRNA(His) + AMP + diphosphate + H(+). The polypeptide is Histidine--tRNA ligase (Pseudomonas syringae pv. syringae (strain B728a)).